The sequence spans 529 residues: Bifunctional purine biosynthesis protein PurH (529 aa).

One can recognise an MGS-like domain in the interval 1 to 148; that stretch reads MQQRRPVRRA…KNHKDVAIVV (148 aa).

The protein belongs to the PurH family.

It catalyses the reaction (6R)-10-formyltetrahydrofolate + 5-amino-1-(5-phospho-beta-D-ribosyl)imidazole-4-carboxamide = 5-formamido-1-(5-phospho-D-ribosyl)imidazole-4-carboxamide + (6S)-5,6,7,8-tetrahydrofolate. The enzyme catalyses IMP + H2O = 5-formamido-1-(5-phospho-D-ribosyl)imidazole-4-carboxamide. The protein operates within purine metabolism; IMP biosynthesis via de novo pathway; 5-formamido-1-(5-phospho-D-ribosyl)imidazole-4-carboxamide from 5-amino-1-(5-phospho-D-ribosyl)imidazole-4-carboxamide (10-formyl THF route): step 1/1. Its pathway is purine metabolism; IMP biosynthesis via de novo pathway; IMP from 5-formamido-1-(5-phospho-D-ribosyl)imidazole-4-carboxamide: step 1/1. The chain is Bifunctional purine biosynthesis protein PurH from Salmonella dublin (strain CT_02021853).